The primary structure comprises 80 residues: uncharacterized protein (80 aa).

This is an uncharacterized protein from Vaccinia virus (strain Copenhagen) (VACV).